Consider the following 230-residue polypeptide: Fibrillarin-like rRNA/tRNA 2'-O-methyltransferase (230 aa).

S-adenosyl-L-methionine is bound by residues 89–90, 107–108, 132–133, and 152–155; these read TT, EV, DA, and DISQ.

This sequence belongs to the methyltransferase superfamily. Fibrillarin family. In terms of assembly, interacts with nop5. Component of box C/D small ribonucleoprotein (sRNP) particles that contain rpl7ae, FlpA and nop5, plus a guide RNA.

Functionally, involved in pre-rRNA and tRNA processing. Utilizes the methyl donor S-adenosyl-L-methionine to catalyze the site-specific 2'-hydroxyl methylation of ribose moieties in rRNA and tRNA. Site specificity is provided by a guide RNA that base pairs with the substrate. Methylation occurs at a characteristic distance from the sequence involved in base pairing with the guide RNA. This chain is Fibrillarin-like rRNA/tRNA 2'-O-methyltransferase, found in Thermoplasma acidophilum (strain ATCC 25905 / DSM 1728 / JCM 9062 / NBRC 15155 / AMRC-C165).